A 643-amino-acid polypeptide reads, in one-letter code: Protein disulfide-isomerase A4 (643 aa).

A signal peptide spans 1 to 20 (MKLRKAWLLVLLLALTQLLA). 2 Thioredoxin domains span residues 21-167 (AASA…EVSQ) and 167-299 (QPDW…EFLK). A disordered region spans residues 24–58 (AEDAHEDASDSENPIEDDDDEEEDEEDEDDLEVKE). Acidic residues predominate over residues 32-56 (SDSENPIEDDDDEEEDEEDEDDLEV). Positions 89–92 (CGHC) match the CXXC motif. 2 disulfides stabilise this stretch: Cys-89–Cys-92 and Cys-204–Cys-207. Lys-364 carries the N6-acetyllysine modification. The 132-residue stretch at 503–634 (FKKGKLKPVI…LSKFIDEHAT (132 aa)) folds into the Thioredoxin 3 domain. The CXXC signature appears at 553-556 (CGHC). A disulfide bridge links Cys-553 with Cys-556. The Prevents secretion from ER motif lies at 640-643 (KEEL).

The protein belongs to the protein disulfide isomerase family. Part of a large chaperone multiprotein complex comprising DNAJB11, HSP90B1, HSPA5, HYOU, PDIA2, PDIA4, PDIA6, PPIB, SDF2L1, UGGT1 and very small amounts of ERP29, but not, or at very low levels, CALR nor CANX. Component of a complex containing at least CRELD2, MANF, MATN3 and PDIA4. In terms of processing, O-glycosylated.

It is found in the endoplasmic reticulum lumen. Its subcellular location is the melanosome. It catalyses the reaction Catalyzes the rearrangement of -S-S- bonds in proteins.. This chain is Protein disulfide-isomerase A4 (Pdia4), found in Rattus norvegicus (Rat).